A 200-amino-acid chain; its full sequence is NAD(P)H-quinone oxidoreductase subunit 6, chloroplastic (200 aa).

Transmembrane regions (helical) follow at residues 13–33 (IIFF…VLLS), 35–55 (IVYS…LYFA), 64–84 (AQIL…VMLI), 102–122 (ITLA…LNTS), and 156–176 (LLPF…AIVI).

It belongs to the complex I subunit 6 family. In terms of assembly, NDH is composed of at least 16 different subunits, 5 of which are encoded in the nucleus.

It localises to the plastid. The protein localises to the chloroplast thylakoid membrane. It carries out the reaction a plastoquinone + NADH + (n+1) H(+)(in) = a plastoquinol + NAD(+) + n H(+)(out). The enzyme catalyses a plastoquinone + NADPH + (n+1) H(+)(in) = a plastoquinol + NADP(+) + n H(+)(out). Functionally, NDH shuttles electrons from NAD(P)H:plastoquinone, via FMN and iron-sulfur (Fe-S) centers, to quinones in the photosynthetic chain and possibly in a chloroplast respiratory chain. The immediate electron acceptor for the enzyme in this species is believed to be plastoquinone. Couples the redox reaction to proton translocation, and thus conserves the redox energy in a proton gradient. The protein is NAD(P)H-quinone oxidoreductase subunit 6, chloroplastic (ndhG) of Physcomitrium patens (Spreading-leaved earth moss).